The primary structure comprises 482 residues: tRNA sulfurtransferase (482 aa).

The 105-residue stretch at 61–165 (LTIRDALTRI…DDRLLLIKGR (105 aa)) folds into the THUMP domain. Residues 183–184 (LI), lysine 265, glycine 287, and glutamine 296 each bind ATP. Cysteines 344 and 456 form a disulfide. A Rhodanese domain is found at 404–482 (CGPNDVILDI…GFNNVKVYRP (79 aa)). The active-site Cysteine persulfide intermediate is the cysteine 456.

This sequence belongs to the ThiI family.

It localises to the cytoplasm. It catalyses the reaction [ThiI sulfur-carrier protein]-S-sulfanyl-L-cysteine + a uridine in tRNA + 2 reduced [2Fe-2S]-[ferredoxin] + ATP + H(+) = [ThiI sulfur-carrier protein]-L-cysteine + a 4-thiouridine in tRNA + 2 oxidized [2Fe-2S]-[ferredoxin] + AMP + diphosphate. The enzyme catalyses [ThiS sulfur-carrier protein]-C-terminal Gly-Gly-AMP + S-sulfanyl-L-cysteinyl-[cysteine desulfurase] + AH2 = [ThiS sulfur-carrier protein]-C-terminal-Gly-aminoethanethioate + L-cysteinyl-[cysteine desulfurase] + A + AMP + 2 H(+). It functions in the pathway cofactor biosynthesis; thiamine diphosphate biosynthesis. Functionally, catalyzes the ATP-dependent transfer of a sulfur to tRNA to produce 4-thiouridine in position 8 of tRNAs, which functions as a near-UV photosensor. Also catalyzes the transfer of sulfur to the sulfur carrier protein ThiS, forming ThiS-thiocarboxylate. This is a step in the synthesis of thiazole, in the thiamine biosynthesis pathway. The sulfur is donated as persulfide by IscS. This is tRNA sulfurtransferase from Shigella dysenteriae serotype 1 (strain Sd197).